The chain runs to 377 residues: Succinyl-diaminopimelate desuccinylase (377 aa).

A Zn(2+)-binding site is contributed by His-66. Asp-68 is an active-site residue. Asp-99 is a binding site for Zn(2+). The active-site Proton acceptor is Glu-133. Glu-134, Glu-162, and His-348 together coordinate Zn(2+).

This sequence belongs to the peptidase M20A family. DapE subfamily. As to quaternary structure, homodimer. It depends on Zn(2+) as a cofactor. Co(2+) is required as a cofactor.

It catalyses the reaction N-succinyl-(2S,6S)-2,6-diaminopimelate + H2O = (2S,6S)-2,6-diaminopimelate + succinate. Its pathway is amino-acid biosynthesis; L-lysine biosynthesis via DAP pathway; LL-2,6-diaminopimelate from (S)-tetrahydrodipicolinate (succinylase route): step 3/3. Its function is as follows. Catalyzes the hydrolysis of N-succinyl-L,L-diaminopimelic acid (SDAP), forming succinate and LL-2,6-diaminopimelate (DAP), an intermediate involved in the bacterial biosynthesis of lysine and meso-diaminopimelic acid, an essential component of bacterial cell walls. This Histophilus somni (strain 2336) (Haemophilus somnus) protein is Succinyl-diaminopimelate desuccinylase.